Reading from the N-terminus, the 102-residue chain is Large ribosomal subunit protein bL21 (102 aa).

It belongs to the bacterial ribosomal protein bL21 family. In terms of assembly, part of the 50S ribosomal subunit. Contacts protein L20.

Its function is as follows. This protein binds to 23S rRNA in the presence of protein L20. The polypeptide is Large ribosomal subunit protein bL21 (Campylobacter hominis (strain ATCC BAA-381 / DSM 21671 / CCUG 45161 / LMG 19568 / NCTC 13146 / CH001A)).